A 729-amino-acid chain; its full sequence is Fatty acid oxidation complex subunit alpha (729 aa).

An enoyl-CoA hydratase/isomerase region spans residues 1–189; it reads MLYKGDTLYL…KIGLVDGVVK (189 aa). Residue Asp-296 coordinates substrate. The tract at residues 311–729 is 3-hydroxyacyl-CoA dehydrogenase; it reads ETPKQAAVLG…ARPVGSLKTA (419 aa). Residues Met-324, Asp-343, 400-402, Lys-407, and Ser-429 each bind NAD(+); that span reads VVE. The active-site For 3-hydroxyacyl-CoA dehydrogenase activity is His-450. Asn-453 provides a ligand contact to NAD(+). Positions 500 and 660 each coordinate substrate. Positions 708-729 are disordered; sequence RHNEPYYPPVEPARPVGSLKTA.

In the N-terminal section; belongs to the enoyl-CoA hydratase/isomerase family. This sequence in the C-terminal section; belongs to the 3-hydroxyacyl-CoA dehydrogenase family. In terms of assembly, heterotetramer of two alpha chains (FadB) and two beta chains (FadA).

It catalyses the reaction a (3S)-3-hydroxyacyl-CoA + NAD(+) = a 3-oxoacyl-CoA + NADH + H(+). The catalysed reaction is a (3S)-3-hydroxyacyl-CoA = a (2E)-enoyl-CoA + H2O. The enzyme catalyses a 4-saturated-(3S)-3-hydroxyacyl-CoA = a (3E)-enoyl-CoA + H2O. It carries out the reaction (3S)-3-hydroxybutanoyl-CoA = (3R)-3-hydroxybutanoyl-CoA. It catalyses the reaction a (3Z)-enoyl-CoA = a 4-saturated (2E)-enoyl-CoA. The catalysed reaction is a (3E)-enoyl-CoA = a 4-saturated (2E)-enoyl-CoA. It functions in the pathway lipid metabolism; fatty acid beta-oxidation. Involved in the aerobic and anaerobic degradation of long-chain fatty acids via beta-oxidation cycle. Catalyzes the formation of 3-oxoacyl-CoA from enoyl-CoA via L-3-hydroxyacyl-CoA. It can also use D-3-hydroxyacyl-CoA and cis-3-enoyl-CoA as substrate. The chain is Fatty acid oxidation complex subunit alpha from Salmonella enteritidis PT4 (strain P125109).